Here is a 121-residue protein sequence, read N- to C-terminus: uncharacterized protein (121 aa).

Disordered regions lie at residues 1–28 (MGCA…QNGD) and 60–81 (QENL…EIPG). 2 positions are modified to phosphoserine: Ser-95 and Ser-115.

This is an uncharacterized protein from Mus musculus (Mouse).